A 372-amino-acid chain; its full sequence is Chaperone protein DnaJ (372 aa).

The 66-residue stretch at 5–70 folds into the J domain; that stretch reads DYYDLLEVGR…EKRAGYDRYG (66 aa). Residues 134 to 212 form a CR-type zinc finger; that stretch reads GIQAPIHYVT…CGGSGRRRDE (79 aa). Zn(2+) is bound by residues Cys147, Cys150, Cys164, Cys167, Cys186, Cys189, Cys200, and Cys203. 4 CXXCXGXG motif repeats span residues 147-154, 164-171, 186-193, and 200-207; these read CDTCQGTG, CHTCQGSG, CTTCYGEG, and CKKCGGSG.

This sequence belongs to the DnaJ family. As to quaternary structure, homodimer. Zn(2+) serves as cofactor.

The protein resides in the cytoplasm. In terms of biological role, participates actively in the response to hyperosmotic and heat shock by preventing the aggregation of stress-denatured proteins and by disaggregating proteins, also in an autonomous, DnaK-independent fashion. Unfolded proteins bind initially to DnaJ; upon interaction with the DnaJ-bound protein, DnaK hydrolyzes its bound ATP, resulting in the formation of a stable complex. GrpE releases ADP from DnaK; ATP binding to DnaK triggers the release of the substrate protein, thus completing the reaction cycle. Several rounds of ATP-dependent interactions between DnaJ, DnaK and GrpE are required for fully efficient folding. Also involved, together with DnaK and GrpE, in the DNA replication of plasmids through activation of initiation proteins. In Wolbachia pipientis wMel, this protein is Chaperone protein DnaJ.